Consider the following 259-residue polypeptide: Imidazole glycerol phosphate synthase subunit HisF (259 aa).

Catalysis depends on residues D11 and D130.

Belongs to the HisA/HisF family. In terms of assembly, heterodimer of HisH and HisF.

Its subcellular location is the cytoplasm. The catalysed reaction is 5-[(5-phospho-1-deoxy-D-ribulos-1-ylimino)methylamino]-1-(5-phospho-beta-D-ribosyl)imidazole-4-carboxamide + L-glutamine = D-erythro-1-(imidazol-4-yl)glycerol 3-phosphate + 5-amino-1-(5-phospho-beta-D-ribosyl)imidazole-4-carboxamide + L-glutamate + H(+). It participates in amino-acid biosynthesis; L-histidine biosynthesis; L-histidine from 5-phospho-alpha-D-ribose 1-diphosphate: step 5/9. IGPS catalyzes the conversion of PRFAR and glutamine to IGP, AICAR and glutamate. The HisF subunit catalyzes the cyclization activity that produces IGP and AICAR from PRFAR using the ammonia provided by the HisH subunit. The protein is Imidazole glycerol phosphate synthase subunit HisF of Carboxydothermus hydrogenoformans (strain ATCC BAA-161 / DSM 6008 / Z-2901).